A 345-amino-acid polypeptide reads, in one-letter code: Protein lifeguard 1 (345 aa).

The disordered stretch occupies residues 1–115 (MSHEKSFLVS…GNYQEEGPPS (115 aa)). Composition is skewed to pro residues over residues 24–46 (APMPPYVQAPYPGAPYPQAPFQP) and 79–98 (GPYPQSPFPPNPYGQPPPFQ). Transmembrane regions (helical) follow at residues 139–159 (VFLVLTLQLSVTLSTVAIFTF), 171–191 (VWTYYVSYAIFFISLIVLSCC), 202–222 (LVALSILTVSLSYMVGMIASF), 227–247 (AVIMAVGITTAVCFTVVIFSM), 257–277 (MGVLLVSVVVLFIFAILCIFI), 281–301 (ILEIVYASLGALLFTCFLAVD), and 320–340 (FAALNLYTDIINIFLYILTII).

It belongs to the BI1 family. LFG subfamily.

Its subcellular location is the membrane. Potential apoptotic regulator. This chain is Protein lifeguard 1 (Grina), found in Mus musculus (Mouse).